The chain runs to 143 residues: Nucleoside diphosphate kinase (143 aa).

6 residues coordinate ATP: Lys11, Phe59, Arg87, Thr93, Arg104, and Asn114. His117 (pros-phosphohistidine intermediate) is an active-site residue.

This sequence belongs to the NDK family. Homotetramer. It depends on Mg(2+) as a cofactor.

The protein localises to the cytoplasm. The catalysed reaction is a 2'-deoxyribonucleoside 5'-diphosphate + ATP = a 2'-deoxyribonucleoside 5'-triphosphate + ADP. It carries out the reaction a ribonucleoside 5'-diphosphate + ATP = a ribonucleoside 5'-triphosphate + ADP. Major role in the synthesis of nucleoside triphosphates other than ATP. The ATP gamma phosphate is transferred to the NDP beta phosphate via a ping-pong mechanism, using a phosphorylated active-site intermediate. This is Nucleoside diphosphate kinase from Citrobacter koseri (strain ATCC BAA-895 / CDC 4225-83 / SGSC4696).